The following is a 598-amino-acid chain: MNELIKHKLELLPDSPGCYLHKDKEGTIIYVGKAKNLKKRVRSYFRGSHDTKTELLVSEIVDFEYIVTESDTEALLLEINLIQKNMPKYNIKLKDDKSYPFLKITNESFPRLVITRYIKKNDGLYFGPYPDSYTANEVKKLLDRIFPFKKCKNPINKVCFYYHLGQCCAHTICHTDKVYWDRLIDDVKHFLNGKDDKIIEDLRSKMLAASEEMAFERAAEYRDLISGIATMRTKQRVMSKDLQDRDIFGYYVDKGWMCVQVFFVRQGKLIQRDVNLFPYYNDAEEDFLTYMGQFYQDKQHFIPKEVFIPEAIDEELVAAIVPTKIIKPKRGEKKQLVALATKNARVSLQQKFDLLEKDIKKTSGAIENLGQLLKIDKPVRIEAFDNSNIQGTSPVAAMVVFVDGKPSKKDYRKFKIKTVVGPDDYASMREVLFRRYSRVKKEGLQAPNLIIVDGGVGQVNVAKDVIEKQLGLTIPVAGLQKNDKHQTHDLLFGNPLEVVPLPRRSEEFFLLHRIQDEVHRFAVTFHRQVRRKNSFSSTLDHISGLGPKRKQLLLRHFKTITAIASATSEEIQALGIPKTVVEAIQQQITDNKNDRSSP.

The GIY-YIG domain occupies D14–I91. In terms of domain architecture, UVR spans D196–M231.

Belongs to the UvrC family. As to quaternary structure, interacts with UvrB in an incision complex.

Its subcellular location is the cytoplasm. Functionally, the UvrABC repair system catalyzes the recognition and processing of DNA lesions. UvrC both incises the 5' and 3' sides of the lesion. The N-terminal half is responsible for the 3' incision and the C-terminal half is responsible for the 5' incision. The sequence is that of UvrABC system protein C from Streptococcus pyogenes serotype M3 (strain ATCC BAA-595 / MGAS315).